The following is a 136-amino-acid chain: ATP synthase epsilon chain (136 aa).

The tract at residues 112–136 (GNSADKLKAKESLNKARARSQAVGE) is disordered. Basic and acidic residues predominate over residues 116–125 (DKLKAKESLN).

Belongs to the ATPase epsilon chain family. In terms of assembly, F-type ATPases have 2 components, CF(1) - the catalytic core - and CF(0) - the membrane proton channel. CF(1) has five subunits: alpha(3), beta(3), gamma(1), delta(1), epsilon(1). CF(0) has three main subunits: a, b and c.

Its subcellular location is the cellular thylakoid membrane. In terms of biological role, produces ATP from ADP in the presence of a proton gradient across the membrane. In Prochlorococcus marinus (strain SARG / CCMP1375 / SS120), this protein is ATP synthase epsilon chain.